The primary structure comprises 186 residues: Threonylcarbamoyl-AMP synthase (186 aa).

The YrdC-like domain maps to 5–186 (TQSINDAVKC…DAITGEILRL (182 aa)).

This sequence belongs to the SUA5 family. TsaC subfamily.

The protein localises to the cytoplasm. The enzyme catalyses L-threonine + hydrogencarbonate + ATP = L-threonylcarbamoyladenylate + diphosphate + H2O. In terms of biological role, required for the formation of a threonylcarbamoyl group on adenosine at position 37 (t(6)A37) in tRNAs that read codons beginning with adenine. Catalyzes the conversion of L-threonine, HCO(3)(-)/CO(2) and ATP to give threonylcarbamoyl-AMP (TC-AMP) as the acyladenylate intermediate, with the release of diphosphate. This chain is Threonylcarbamoyl-AMP synthase, found in Coxiella burnetii (strain RSA 493 / Nine Mile phase I).